Reading from the N-terminus, the 249-residue chain is uncharacterized protein (249 aa).

This is an uncharacterized protein from Escherichia coli O6:H1 (strain CFT073 / ATCC 700928 / UPEC).